A 282-amino-acid chain; its full sequence is Elongation factor Ts (282 aa).

Residues 80–83 are involved in Mg(2+) ion dislocation from EF-Tu; that stretch reads TDFV.

This sequence belongs to the EF-Ts family.

Its subcellular location is the cytoplasm. Associates with the EF-Tu.GDP complex and induces the exchange of GDP to GTP. It remains bound to the aminoacyl-tRNA.EF-Tu.GTP complex up to the GTP hydrolysis stage on the ribosome. This chain is Elongation factor Ts (tsf), found in Pasteurella multocida (strain Pm70).